Reading from the N-terminus, the 370-residue chain is Chaperone protein DnaJ (370 aa).

A J domain is found at 7-73; that stretch reads DYYEILGVPR…QKRAMYDRFG (67 aa). The segment at 144–226 adopts a CR-type zinc-finger fold; sequence GTEIPIEYER…CGGSGRVLRR (83 aa). Zn(2+) contacts are provided by cysteine 157, cysteine 160, cysteine 174, cysteine 177, cysteine 200, cysteine 203, cysteine 214, and cysteine 217. 4 CXXCXGXG motif repeats span residues 157-164, 174-181, 200-207, and 214-221; these read CPRCGGTG, CDECGGTG, and CHECGGSG.

It belongs to the DnaJ family. As to quaternary structure, homodimer. Zn(2+) is required as a cofactor.

Its subcellular location is the cytoplasm. Participates actively in the response to hyperosmotic and heat shock by preventing the aggregation of stress-denatured proteins and by disaggregating proteins, also in an autonomous, DnaK-independent fashion. Unfolded proteins bind initially to DnaJ; upon interaction with the DnaJ-bound protein, DnaK hydrolyzes its bound ATP, resulting in the formation of a stable complex. GrpE releases ADP from DnaK; ATP binding to DnaK triggers the release of the substrate protein, thus completing the reaction cycle. Several rounds of ATP-dependent interactions between DnaJ, DnaK and GrpE are required for fully efficient folding. Also involved, together with DnaK and GrpE, in the DNA replication of plasmids through activation of initiation proteins. The protein is Chaperone protein DnaJ of Thermotoga neapolitana (strain ATCC 49049 / DSM 4359 / NBRC 107923 / NS-E).